Here is a 345-residue protein sequence, read N- to C-terminus: Tetraacyldisaccharide 4'-kinase (345 aa).

Residue 61 to 68 (TAGGTGKT) participates in ATP binding.

This sequence belongs to the LpxK family.

The catalysed reaction is a lipid A disaccharide + ATP = a lipid IVA + ADP + H(+). It participates in glycolipid biosynthesis; lipid IV(A) biosynthesis; lipid IV(A) from (3R)-3-hydroxytetradecanoyl-[acyl-carrier-protein] and UDP-N-acetyl-alpha-D-glucosamine: step 6/6. In terms of biological role, transfers the gamma-phosphate of ATP to the 4'-position of a tetraacyldisaccharide 1-phosphate intermediate (termed DS-1-P) to form tetraacyldisaccharide 1,4'-bis-phosphate (lipid IVA). The polypeptide is Tetraacyldisaccharide 4'-kinase (Xanthomonas axonopodis pv. citri (strain 306)).